We begin with the raw amino-acid sequence, 198 residues long: Recombination protein RecR (198 aa).

The segment at 58 to 73 adopts a C4-type zinc-finger fold; that stretch reads CLNCGNVGTSDICDIC. The 95-residue stretch at 81-175 folds into the Toprim domain; it reads GELCVVEDVA…RLTSLAQGVP (95 aa).

This sequence belongs to the RecR family.

Its function is as follows. May play a role in DNA repair. It seems to be involved in an RecBC-independent recombinational process of DNA repair. It may act with RecF and RecO. This is Recombination protein RecR from Ruegeria pomeroyi (strain ATCC 700808 / DSM 15171 / DSS-3) (Silicibacter pomeroyi).